The chain runs to 169 residues: Large ribosomal subunit protein uL5 (169 aa).

Belongs to the universal ribosomal protein uL5 family. As to quaternary structure, part of the 50S ribosomal subunit; contacts the 5S rRNA and probably tRNA. Forms a bridge to the 30S subunit in the 70S ribosome.

Its function is as follows. This is one of the proteins that bind and probably mediate the attachment of the 5S RNA into the large ribosomal subunit, where it forms part of the central protuberance. In the 70S ribosome it contacts protein S13 of the 30S subunit (bridge B1b), connecting the 2 subunits; this bridge is implicated in subunit movement. May contact the P site tRNA; the 5S rRNA and some of its associated proteins might help stabilize positioning of ribosome-bound tRNAs. The sequence is that of Large ribosomal subunit protein uL5 from Methanosarcina barkeri (strain Fusaro / DSM 804).